We begin with the raw amino-acid sequence, 260 residues long: CD320 antigen (260 aa).

Residues 1 to 28 (MARGGAGRAVALGLVLRLLFGLRTGLEA) form the signal peptide. Residues 29-208 (APAPAHTRVQ…DSSRNPSAYG (180 aa)) lie on the Extracellular side of the membrane. The LDL-receptor class A 1 domain maps to 46–83 (SCPTDTFQCLTSGYCVPLSWRCDGDQDCSDGSDEEDCR). Cystine bridges form between Cys-47/Cys-60, Cys-54/Cys-73, and Cys-67/Cys-82. Residues Trp-65, Asp-68, Asp-70, Asp-72, Asp-78, and Glu-79 each coordinate Ca(2+). Residue Asn-118 is glycosylated (N-linked (GlcNAc...) asparagine). Residues 123 to 160 (PCQESELHCILDDVCIPHTWRCDGHPDCLDSSDELSCD) form the LDL-receptor class A 2 domain. Intrachain disulfides connect Cys-124–Cys-137, Cys-131–Cys-150, and Cys-144–Cys-159. Trp-142, Asp-145, His-147, Asp-149, Asp-155, and Glu-156 together coordinate Ca(2+). A glycan (N-linked (GlcNAc...) asparagine) is linked at Asn-185. The helical transmembrane segment at 209-229 (VIAAAGVLSAILVSATLLILL) threads the bilayer. Residues 230-260 (RLRGQGYLPPPGLLVAVKESLLLSERKTSLI) are Cytoplasmic-facing.

Interacts (via LDL-receptor class A domains) with TCN2.

The protein resides in the cell membrane. In terms of biological role, receptor for transcobalamin saturated with cobalamin (TCbl). Plays an important role in cobalamin uptake. Plasma membrane protein that is expressed on follicular dendritic cells (FDC) and mediates interaction with germinal center B cells. Functions as a costimulator to promote B cell responses to antigenic stimuli; promotes B cell differentiation and proliferation. Germinal center-B (GC-B) cells differentiate into memory B-cells and plasma cells (PC) through interaction with T-cells and follicular dendritic cells (FDC). CD320 augments the proliferation of PC precursors generated by IL-10. In Mus musculus (Mouse), this protein is CD320 antigen (Cd320).